The primary structure comprises 224 residues: Glutathione S-transferase Mu 5 (224 aa).

A GST N-terminal domain is found at 4–91; the sequence is KSMVLGYWDI…YIARKHNMCG (88 aa). Phosphoserine is present on S5. Glutathione contacts are provided by residues 10 to 11, 49 to 53, 62 to 63, and 75 to 76; these read YW, WLDVK, NL, and QS. The 119-residue stretch at 93–211 folds into the GST C-terminal domain; the sequence is TEEEKIRVDI…QSDRFFKMPI (119 aa). A substrate-binding site is contributed by Y119.

It belongs to the GST superfamily. Mu family. As to quaternary structure, homodimer. Interacts with PFKM isoform 2 and isoform 3 (via N-terminal testis-specific region).

It is found in the cytoplasm. It carries out the reaction RX + glutathione = an S-substituted glutathione + a halide anion + H(+). Conjugation of reduced glutathione to a wide number of exogenous and endogenous hydrophobic electrophiles. The chain is Glutathione S-transferase Mu 5 (Gstm5) from Mus musculus (Mouse).